Consider the following 370-residue polypeptide: DNA replication and repair protein RecF (370 aa).

30–37 (GENAQGKT) serves as a coordination point for ATP.

Belongs to the RecF family.

It localises to the cytoplasm. Its function is as follows. The RecF protein is involved in DNA metabolism; it is required for DNA replication and normal SOS inducibility. RecF binds preferentially to single-stranded, linear DNA. It also seems to bind ATP. This is DNA replication and repair protein RecF from Bacillus pumilus (strain SAFR-032).